The following is a 472-amino-acid chain: Uronate isomerase (472 aa).

It belongs to the metallo-dependent hydrolases superfamily. Uronate isomerase family.

It carries out the reaction D-glucuronate = D-fructuronate. The catalysed reaction is aldehydo-D-galacturonate = keto-D-tagaturonate. Its pathway is carbohydrate metabolism; pentose and glucuronate interconversion. The chain is Uronate isomerase from Nostoc punctiforme (strain ATCC 29133 / PCC 73102).